A 142-amino-acid chain; its full sequence is ATP synthase epsilon chain (142 aa).

The protein belongs to the ATPase epsilon chain family. As to quaternary structure, F-type ATPases have 2 components, CF(1) - the catalytic core - and CF(0) - the membrane proton channel. CF(1) has five subunits: alpha(3), beta(3), gamma(1), delta(1), epsilon(1). CF(0) has three main subunits: a, b and c.

The protein localises to the cell inner membrane. In terms of biological role, produces ATP from ADP in the presence of a proton gradient across the membrane. This is ATP synthase epsilon chain from Haemophilus influenzae (strain 86-028NP).